A 69-amino-acid chain; its full sequence is Dermaseptin-H3 (69 aa).

The N-terminal stretch at 1–22 is a signal peptide; the sequence is MAFLKKSLFLVLFLGMVSLSIC. Residues 23 to 43 constitute a propeptide that is removed on maturation; sequence EEEKRENEDEEKQEDDEQSEM. Positions 24-44 are disordered; that stretch reads EEKRENEDEEKQEDDEQSEMK. The segment covering 30 to 40 has biased composition (acidic residues); it reads EDEEKQEDDEQ. At Leu66 the chain carries Leucine amide. Positions 68-69 are excised as a propeptide; it reads EQ.

Belongs to the frog skin active peptide (FSAP) family. Dermaseptin subfamily. In terms of tissue distribution, expressed by the skin glands.

The protein localises to the secreted. Functionally, possesses a potent antimicrobial activity against Gram-positive and Gram-negative bacteria. Probably acts by disturbing membrane functions with its amphipathic structure. In Pithecopus azureus (Orange-legged monkey tree frog), this protein is Dermaseptin-H3.